Reading from the N-terminus, the 327-residue chain is Zinc transport protein ZntB (327 aa).

Over 1–273 the chain is Cytoplasmic; it reads MEAIKGSDVN…ARRTYTMSLM (273 aa). The chain crosses the membrane as a helical span at residues 274-294; it reads AMVFLPSTFLTGLFGVNLGGI. Residues 295-300 are Periplasmic-facing; sequence PGGGWQ. A helical membrane pass occupies residues 301–321; that stretch reads FGFSIFCILLVVLIGGVALWL. Residues 322 to 327 are Cytoplasmic-facing; the sequence is HRSKWL.

Belongs to the CorA metal ion transporter (MIT) (TC 1.A.35) family.

The protein localises to the cell inner membrane. The catalysed reaction is Zn(2+)(out) + H(+)(out) = Zn(2+)(in) + H(+)(in). Functionally, zinc transporter. Acts as a Zn(2+):proton symporter, which likely mediates zinc ion uptake. In Escherichia coli O6:K15:H31 (strain 536 / UPEC), this protein is Zinc transport protein ZntB.